A 680-amino-acid chain; its full sequence is Lipase 1 (680 aa).

A signal peptide spans 1 to 34 (MKSQNKYSIRKFSVGASSILIATLLFLSGGQAQA). Positions 35-290 (AEKQVNMGNS…AKAKGDQTNK (256 aa)) are excised as a propeptide. 2 disordered regions span residues 39–58 (VNMGNSQEDTVTAQSIGDQQ) and 82–260 (KNLH…KNGL). Positions 40-58 (NMGNSQEDTVTAQSIGDQQ) are enriched in polar residues. Positions 84–112 (LHNDKTISEENHRKTDDLNKDQLKDDKKS) are enriched in basic and acidic residues. Composition is skewed to polar residues over residues 162 to 193 (SQDLNANNNLPSQSRTKVSPSLNKSDQTSQRE) and 204 to 223 (QPQQKNQANDKITDHNFNNE). Residues 224–234 (QEVKPQKDEKT) show a composition bias toward basic and acidic residues. Polar residues predominate over residues 235 to 246 (LSVSDLKNNQKS). S408 acts as the Nucleophile in catalysis. D600 serves as the catalytic Charge relay system. A Ca(2+)-binding site is contributed by D638. H639 (charge relay system) is an active-site residue. Ca(2+)-binding residues include D641, D646, and D649.

This sequence belongs to the AB hydrolase superfamily. Lipase family.

The protein resides in the secreted. It catalyses the reaction a triacylglycerol + H2O = a diacylglycerol + a fatty acid + H(+). In Staphylococcus aureus (strain MRSA252), this protein is Lipase 1 (lip1).